The primary structure comprises 203 residues: Large ribosomal subunit protein uL22 (203 aa).

Residues 138 to 167 are compositionally biased toward polar residues; it reads PENTQSGALSQQSQAEQPQNDPENGVDSQL. The disordered stretch occupies residues 138-203; the sequence is PENTQSGALS…TVLAQEKEVK (66 aa). Residues 168–177 show a composition bias toward low complexity; it reads SAKTNSTTTA. The segment covering 183 to 196 has biased composition (polar residues); that stretch reads ADNSTKNDATNTVL.

This sequence belongs to the universal ribosomal protein uL22 family. In terms of assembly, part of the 50S ribosomal subunit.

In terms of biological role, this protein binds specifically to 23S rRNA; its binding is stimulated by other ribosomal proteins, e.g. L4, L17, and L20. It is important during the early stages of 50S assembly. It makes multiple contacts with different domains of the 23S rRNA in the assembled 50S subunit and ribosome. The globular domain of the protein is located near the polypeptide exit tunnel on the outside of the subunit, while an extended beta-hairpin is found that lines the wall of the exit tunnel in the center of the 70S ribosome. The sequence is that of Large ribosomal subunit protein uL22 from Mesomycoplasma hyopneumoniae (strain 7448) (Mycoplasma hyopneumoniae).